Reading from the N-terminus, the 176-residue chain is Nucleoside triphosphate/diphosphate phosphatase (176 aa).

Arg23 serves as the catalytic Proton donor. Positions 87, 103, 105, 107, 120, and 123 each coordinate Mg(2+).

It belongs to the Ntdp family. Mg(2+) is required as a cofactor.

It carries out the reaction a ribonucleoside 5'-triphosphate + H2O = a ribonucleoside 5'-diphosphate + phosphate + H(+). The enzyme catalyses a ribonucleoside 5'-diphosphate + H2O = a ribonucleoside 5'-phosphate + phosphate + H(+). Its function is as follows. Has nucleoside phosphatase activity towards nucleoside triphosphates and nucleoside diphosphates. This chain is Nucleoside triphosphate/diphosphate phosphatase, found in Bacillus velezensis (strain DSM 23117 / BGSC 10A6 / LMG 26770 / FZB42) (Bacillus amyloliquefaciens subsp. plantarum).